The primary structure comprises 346 residues: Elongation factor Ts (346 aa).

The tract at residues 80-83 is involved in Mg(2+) ion dislocation from EF-Tu; it reads TDFV.

It belongs to the EF-Ts family.

It is found in the cytoplasm. In terms of biological role, associates with the EF-Tu.GDP complex and induces the exchange of GDP to GTP. It remains bound to the aminoacyl-tRNA.EF-Tu.GTP complex up to the GTP hydrolysis stage on the ribosome. This chain is Elongation factor Ts (tsf), found in Streptococcus pneumoniae (strain ATCC BAA-255 / R6).